Here is a 113-residue protein sequence, read N- to C-terminus: Small ribosomal subunit protein bS6 (113 aa).

Belongs to the bacterial ribosomal protein bS6 family.

Its function is as follows. Binds together with bS18 to 16S ribosomal RNA. This chain is Small ribosomal subunit protein bS6, found in Pseudoalteromonas translucida (strain TAC 125).